The sequence spans 423 residues: UDP-N-acetylglucosamine 1-carboxyvinyltransferase (423 aa).

Residue 22–23 participates in phosphoenolpyruvate binding; the sequence is KN. Arg-93 serves as a coordination point for UDP-N-acetyl-alpha-D-glucosamine. Catalysis depends on Cys-117, which acts as the Proton donor. Position 117 is a 2-(S-cysteinyl)pyruvic acid O-phosphothioketal (Cys-117). UDP-N-acetyl-alpha-D-glucosamine contacts are provided by residues 122–126, Asp-308, and Val-330; that span reads RPVDL.

Belongs to the EPSP synthase family. MurA subfamily.

The protein resides in the cytoplasm. It carries out the reaction phosphoenolpyruvate + UDP-N-acetyl-alpha-D-glucosamine = UDP-N-acetyl-3-O-(1-carboxyvinyl)-alpha-D-glucosamine + phosphate. It participates in cell wall biogenesis; peptidoglycan biosynthesis. Cell wall formation. Adds enolpyruvyl to UDP-N-acetylglucosamine. In Finegoldia magna (strain ATCC 29328 / DSM 20472 / WAL 2508) (Peptostreptococcus magnus), this protein is UDP-N-acetylglucosamine 1-carboxyvinyltransferase.